A 475-amino-acid chain; its full sequence is Crocetin glucosyltransferase 3 (475 aa).

The active-site Proton acceptor is His-16. Residue His-16 coordinates an anthocyanidin. The active-site Charge relay is the Asp-123. UDP-alpha-D-glucose-binding residues include Thr-144, Ala-354, Gln-356, His-371, Trp-374, Asn-375, Ser-376, and Glu-379. Ala-394 serves as a coordination point for an anthocyanidin. Residues Glu-395 and Gln-396 each coordinate UDP-alpha-D-glucose.

This sequence belongs to the UDP-glycosyltransferase family. Mainly expressed in stamens.

The enzyme catalyses crocetin + UDP-alpha-D-glucose = beta-D-glucosyl crocetin + UDP. It carries out the reaction beta-D-glucosyl crocetin + UDP-alpha-D-glucose = bis(beta-D-glucosyl) crocetin + UDP. The catalysed reaction is beta-D-gentiobiosyl crocetin + UDP-alpha-D-glucose = beta-D-gentiobiosyl beta-D-glucosyl crocetin + UDP. Its function is as follows. Crocetin glucosyltransferase involved in the synthesis of crocin, one of the apocarotenoids responsible for the color and bitter taste of saffron. The polypeptide is Crocetin glucosyltransferase 3 (GLT3) (Crocus sativus (Saffron)).